Consider the following 892-residue polypeptide: Alanine--tRNA ligase (892 aa).

Zn(2+)-binding residues include His-574, His-578, Cys-676, and His-680.

Belongs to the class-II aminoacyl-tRNA synthetase family. Zn(2+) serves as cofactor.

The protein localises to the cytoplasm. It carries out the reaction tRNA(Ala) + L-alanine + ATP = L-alanyl-tRNA(Ala) + AMP + diphosphate. In terms of biological role, catalyzes the attachment of alanine to tRNA(Ala) in a two-step reaction: alanine is first activated by ATP to form Ala-AMP and then transferred to the acceptor end of tRNA(Ala). Also edits incorrectly charged Ser-tRNA(Ala) and Gly-tRNA(Ala) via its editing domain. This is Alanine--tRNA ligase from Prochlorococcus marinus (strain MIT 9303).